A 238-amino-acid polypeptide reads, in one-letter code: MADS-box protein 04g005320 (238 aa).

In terms of domain architecture, MADS-box spans 1-61 (MGRGKVELKR…GKLYEFCSTS (61 aa)). The K-box domain maps to 87–177 (SQNNYQEYMK…KTKLEENSVA (91 aa)).

It is found in the nucleus. Probable MADS-box transcription factor that functions with J2 and EJ2 in meristem maturation. The chain is MADS-box protein 04g005320 from Solanum lycopersicum (Tomato).